We begin with the raw amino-acid sequence, 310 residues long: MKVFAGNSNRLLAEAICNYLNLPLGKATVRRFADQEIFVEIGENVRGEDVFIVQSTSFPTNDHLMELLIMIDAVRRSSARRITAVLPYFGYARQDRKPGPRTPISAKLVANLITEAGADRVLTLDLHAGQIQGFFDIPTDNLYAIPILARDVKENYNLKNVMVVSPDVGGVVRARALAKRLDCLLAIVDKRRDRPGESEVMNVIGEVNGKDCLLIDDIVDSGGTLCNAAEALLKNGATSVTAYITHGVLSGGAVARVTSSMLKELVITDSIQPTTAVQSAHNIRVISTAALLGEAISRTSQEESVSSLFD.

Residues 34 to 36 and 93 to 94 each bind ATP; these read DQE and RQ. 2 residues coordinate Mg(2+): His-127 and Asp-167. Lys-190 is a catalytic residue. D-ribose 5-phosphate contacts are provided by residues Arg-192, Asp-216, and 220-224; that span reads DSGGT.

Belongs to the ribose-phosphate pyrophosphokinase family. Class I subfamily. In terms of assembly, homohexamer. It depends on Mg(2+) as a cofactor.

The protein localises to the cytoplasm. It catalyses the reaction D-ribose 5-phosphate + ATP = 5-phospho-alpha-D-ribose 1-diphosphate + AMP + H(+). The protein operates within metabolic intermediate biosynthesis; 5-phospho-alpha-D-ribose 1-diphosphate biosynthesis; 5-phospho-alpha-D-ribose 1-diphosphate from D-ribose 5-phosphate (route I): step 1/1. Involved in the biosynthesis of the central metabolite phospho-alpha-D-ribosyl-1-pyrophosphate (PRPP) via the transfer of pyrophosphoryl group from ATP to 1-hydroxyl of ribose-5-phosphate (Rib-5-P). The protein is Ribose-phosphate pyrophosphokinase of Rhizobium meliloti (strain 1021) (Ensifer meliloti).